A 502-amino-acid polypeptide reads, in one-letter code: Chromatin structure-remodeling complex protein RSC58 (502 aa).

Residues 19–134 (SILNAASVKC…KFSSELLLRE (116 aa)) enclose the Bromo domain. The disordered stretch occupies residues 336-378 (NEEGINRKQNDENNKNVDGKSNGVQDDGGDNDNDATIASANSE). The span at 339-353 (GINRKQNDENNKNVD) shows a compositional bias: basic and acidic residues.

As to quaternary structure, component of the two forms of the RSC complex composed of at least either RSC1 or RSC2, and ARP7, ARP9, LDB7, NPL6, RSC3, RSC30, RSC4, RSC58, RSC6, RSC8, RSC9, SFH1, STH1, HTL1 and probably RTT102. The complexes interact with histone and histone variant components of centromeric chromatin.

The protein localises to the nucleus. Its function is as follows. Component of the chromatin structure-remodeling complex (RSC), which is involved in transcription regulation and nucleosome positioning. RSC is responsible for the transfer of a histone octamer from a nucleosome core particle to naked DNA. The reaction requires ATP and involves an activated RSC-nucleosome intermediate. Remodeling reaction also involves DNA translocation, DNA twist and conformational change. As a reconfigurer of centromeric and flanking nucleosomes, RSC complex is required both for proper kinetochore function in chromosome segregation and, via a PKC1-dependent signaling pathway, for organization of the cellular cytoskeleton. The sequence is that of Chromatin structure-remodeling complex protein RSC58 (RSC58) from Saccharomyces cerevisiae (strain ATCC 204508 / S288c) (Baker's yeast).